The chain runs to 562 residues: Urocanate hydratase (562 aa).

NAD(+) contacts are provided by residues 52–53 (GG), Gln130, 176–178 (GMG), Glu196, Arg201, 242–243 (NA), 263–267 (QTSAH), 273–274 (YL), and Tyr322. The active site involves Cys410. Position 492 (Gly492) interacts with NAD(+).

This sequence belongs to the urocanase family. The cofactor is NAD(+).

It localises to the cytoplasm. It catalyses the reaction 4-imidazolone-5-propanoate = trans-urocanate + H2O. Its pathway is amino-acid degradation; L-histidine degradation into L-glutamate; N-formimidoyl-L-glutamate from L-histidine: step 2/3. Functionally, catalyzes the conversion of urocanate to 4-imidazolone-5-propionate. This is Urocanate hydratase from Klebsiella pneumoniae (strain 342).